A 117-amino-acid chain; its full sequence is Large ribosomal subunit protein bL31B (117 aa).

Positions 75–117 are disordered; it reads KRFERKKEASPADTPPESDSTTENASVEKKAEKKRVTAKGSKK. Over residues 100 to 109 the composition is skewed to basic and acidic residues; it reads SVEKKAEKKR.

It belongs to the bacterial ribosomal protein bL31 family. Type B subfamily. As to quaternary structure, part of the 50S ribosomal subunit.

This Protochlamydia amoebophila (strain UWE25) protein is Large ribosomal subunit protein bL31B.